Consider the following 294-residue polypeptide: Ferredoxin--NADP reductase (294 aa).

The 125-residue stretch at 13–137 folds into the FAD-binding FR-type domain; that stretch reads KNPYIGKCLS…TGPVGKEMLL (125 aa). FAD-binding positions include 72 to 75, 93 to 95, tyrosine 99, 111 to 113, and threonine 152; these read RLYS, CVR, and VCS. Serine 75 and arginine 95 together coordinate NADP(+). NADP(+) is bound by residues threonine 152, 184–185, 214–215, lysine 224, 224–228, 253–254, and glutamate 292; these read IP, SR, KMYIQ, and GL.

Belongs to the ferredoxin--NADP reductase type 1 family. It depends on FAD as a cofactor.

The protein localises to the cellular thylakoid membrane. It carries out the reaction 2 reduced [2Fe-2S]-[ferredoxin] + NADP(+) + H(+) = 2 oxidized [2Fe-2S]-[ferredoxin] + NADPH. The sequence is that of Ferredoxin--NADP reductase (petH) from Spirulina sp.